The primary structure comprises 486 residues: CUGBP Elav-like family member 4 (486 aa).

The interval 1–298 (MYIKMATLAN…AAFAAAQMQQ (298 aa)) is sufficient for RNA-binding and MSE-dependent splicing activity. Residues 18 to 28 (LSTNGLGSSPG) are compositionally biased toward polar residues. Disordered regions lie at residues 18 to 39 (LSTN…LSHS) and 121 to 149 (LPGM…QPPS). Positions 54–135 (IKLFIGQIPR…RPIQVKPADS (82 aa)) constitute an RRM 1 domain. The span at 138 to 149 (RGGSSCLRQPPS) shows a compositional bias: polar residues. The RRM 2 domain occupies 152–232 (RKLFVGMLNK…SSLVVKFADT (81 aa)). A necessary for TNNT2 exon 5 inclusion region spans residues 239-258 (RRMQQMAGQMGMFNPMAIPF). An RRM 3 domain is found at 404–479 (PQPPPMIPQQ…KRLKVQLKRP (76 aa)).

Belongs to the CELF/BRUNOL family. In terms of tissue distribution, ubiquitous. Strongly expressed in the cerebellum, hippocampus, amygdala, temporal and frontal cortex and frontal lobes.

Its subcellular location is the nucleus. The protein resides in the cytoplasm. Its function is as follows. RNA-binding protein implicated in the regulation of pre-mRNA alternative splicing. Mediates exon inclusion and/or exclusion in pre-mRNA that are subject to tissue-specific and developmentally regulated alternative splicing. Specifically activates exon 5 inclusion of cardiac isoforms of TNNT2 during heart remodeling at the juvenile to adult transition. Promotes exclusion of both the smooth muscle (SM) and non-muscle (NM) exons in actinin pre-mRNAs. Activates the splicing of MAPT/Tau exon 10. Binds to muscle-specific splicing enhancer (MSE) intronic sites flanking the alternative exon 5 of TNNT2 pre-mRNA. In Homo sapiens (Human), this protein is CUGBP Elav-like family member 4 (CELF4).